The primary structure comprises 149 residues: Calmodulin (149 aa).

Position 2 is an N-acetylalanine (alanine 2). EF-hand domains are found at residues 8–43 (EQIA…LGQN), 44–79 (PTEA…KMKD), 81–116 (DTEE…LGEK), and 117–149 (LTDE…MMAK). Ca(2+)-binding residues include aspartate 21, aspartate 23, aspartate 25, threonine 27, glutamate 32, aspartate 57, aspartate 59, asparagine 61, threonine 63, glutamate 68, aspartate 94, aspartate 96, asparagine 98, and glutamate 105. At lysine 116 the chain carries N6,N6,N6-trimethyllysine. Residues aspartate 130, aspartate 132, aspartate 134, histidine 136, and glutamate 141 each contribute to the Ca(2+) site.

The protein belongs to the calmodulin family.

Its function is as follows. Calmodulin mediates the control of a large number of enzymes, ion channels and other proteins by Ca(2+). Among the enzymes to be stimulated by the calmodulin-Ca(2+) complex are a number of protein kinases and phosphatases. The protein is Calmodulin of Stylonychia lemnae (Ciliate).